An 825-amino-acid polypeptide reads, in one-letter code: Probable phosphoketolase (825 aa).

It belongs to the XFP family. Requires thiamine diphosphate as cofactor.

In Schizosaccharomyces pombe (strain 972 / ATCC 24843) (Fission yeast), this protein is Probable phosphoketolase.